A 241-amino-acid polypeptide reads, in one-letter code: ATP synthase subunit a (241 aa).

The next 5 helical transmembrane spans lie at 30-50 (GQVFLTSWILLGALLVFISLG), 91-111 (FIGTLFLFVFVSNWGGALIPW), 128-148 (INTTIALALLVSLSYFYAGLS), 193-213 (LVVGVLVFLVPLILPIPVMFL), and 214-234 (GLFTSAIQALIFATLAAYYIG).

The protein belongs to the ATPase A chain family. As to quaternary structure, F-type ATPases have 2 components, CF(1) - the catalytic core - and CF(0) - the membrane proton channel. CF(1) has five subunits: alpha(3), beta(3), gamma(1), delta(1), epsilon(1). CF(0) has four main subunits: a, b, b' and c.

The protein resides in the cellular thylakoid membrane. Its function is as follows. Key component of the proton channel; it plays a direct role in the translocation of protons across the membrane. The protein is ATP synthase subunit a of Prochlorococcus marinus (strain MIT 9215).